We begin with the raw amino-acid sequence, 123 residues long: Glycophorin-B (123 aa).

The signal sequence occupies residues 1–19; sequence MYGKIIFVLLLSEIVSISA. A helical transmembrane segment spans residues 93–113; sequence VVIILIILCVMAGVIGTILLI.

Belongs to the glycophorin-A family. Component of the ankyrin-1 complex in the erythrocyte, composed of ANK1, RHCE, RHAG, SLC4A1, EPB42, GYPA, GYPB and AQP1. Interacts (via the N-terminal) with RHAG; this interaction bridges the (RHAG)2(RHCE) heterotrimer with the SLC4A1 Band 3 I dimer complexed with GYPA. The N-terminal extracellular domain is heavily glycosylated on serine and threonine residues.

The protein localises to the cell membrane. Its function is as follows. Component of the ankyrin-1 complex, a multiprotein complex involved in the stability and shape of the erythrocyte membrane. The polypeptide is Glycophorin-B (Pan troglodytes (Chimpanzee)).